A 687-amino-acid polypeptide reads, in one-letter code: DNA-directed RNA polymerase subunit beta' (687 aa).

Cys-69, Cys-71, Cys-87, and Cys-90 together coordinate Zn(2+). Mg(2+) contacts are provided by Asp-493, Asp-495, and Asp-497.

It belongs to the RNA polymerase beta' chain family. RpoC1 subfamily. As to quaternary structure, in plastids the minimal PEP RNA polymerase catalytic core is composed of four subunits: alpha, beta, beta', and beta''. When a (nuclear-encoded) sigma factor is associated with the core the holoenzyme is formed, which can initiate transcription. Mg(2+) is required as a cofactor. It depends on Zn(2+) as a cofactor.

The protein localises to the plastid. It localises to the chloroplast. The enzyme catalyses RNA(n) + a ribonucleoside 5'-triphosphate = RNA(n+1) + diphosphate. In terms of biological role, DNA-dependent RNA polymerase catalyzes the transcription of DNA into RNA using the four ribonucleoside triphosphates as substrates. The chain is DNA-directed RNA polymerase subunit beta' from Angiopteris evecta (Mule's foot fern).